A 327-amino-acid polypeptide reads, in one-letter code: rRNA 2'-O-methyltransferase fibrillarin (327 aa).

The segment at 1 to 95 (MKPGFSPRGG…NQSGKNVMVE (95 aa)) is disordered. Residues 7-80 (PRGGGFGGRG…GGNRGRGGGR (74 aa)) show a composition bias toward gly residues. Asymmetric dimethylarginine occurs at positions 8, 15, 21, 24, 28, and 31. Residues Lys90, Lys108, and Lys115 each participate in a glycyl lysine isopeptide (Lys-Gly) (interchain with G-Cter in SUMO2) cross-link. Position 108 is an N6-acetyllysine (Lys108). A Phosphoserine modification is found at Ser122. N6-acetyllysine is present on Lys127. Phosphoserine occurs at positions 130 and 132. Residues Lys137, Lys149, and Lys164 each participate in a glycyl lysine isopeptide (Lys-Gly) (interchain with G-Cter in SUMO2) cross-link. S-adenosyl-L-methionine-binding positions include 178–179 (TT) and 197–198 (EF). Residues Lys211 and Lys212 each carry the N6-acetyllysine modification. S-adenosyl-L-methionine-binding positions include 222-223 (DA) and 242-245 (DVAQ).

The protein belongs to the methyltransferase superfamily. Fibrillarin family. In terms of assembly, component of box C/D small nucleolar ribonucleoprotein (snoRNP) particles that contain SNU13, FBL, NOP5 and NOP56, plus a guide RNA. It is associated with the U3, U8, U13, X and Y small nuclear RNAs. Component of several ribosomal and nucleolar protein complexes. Part of the small subunit (SSU) processome, composed of more than 70 proteins and the RNA chaperone small nucleolar RNA (snoRNA) U3. Interacts with PRMT5 and UTP20. Interacts with DDX5 and C1QBP. Interacts with NOL11. Interacts with PIH1D1. Interacts with RRP1B. Interacts with NOLC1. Interacts with SDE2. Interacts with NOP2 and NOP56. By homology to other fibrillarins, some or all of the N-terminal domain arginines are modified to asymmetric dimethylarginine (DMA). In terms of processing, ubiquitinated. Ubiquitination leads to proteasomal degradation. Deubiquitinated by USP36. Post-translationally, acetylated by CREBBP/CBP, preventing methylation of 'Gln-105' of histone H2A (H2AQ104me), without affecting rRNA methylation. Deacetylation by SIRT7 restores methylation of 'Gln-105' of histone H2A (H2AQ104me).

Its subcellular location is the nucleus. The protein localises to the nucleolus. It is found in the nucleoplasm. It catalyses the reaction L-glutaminyl-[histone H2A] + S-adenosyl-L-methionine = N(5)-methyl-L-glutaminyl-[histone H2A] + S-adenosyl-L-homocysteine + H(+). It carries out the reaction a ribonucleotide in rRNA + S-adenosyl-L-methionine = a 2'-O-methylribonucleotide in rRNA + S-adenosyl-L-homocysteine + H(+). The enzyme catalyses a ribonucleotide in U6 snRNA + S-adenosyl-L-methionine = a 2'-O-methylribonucleotide in U6 snRNA + S-adenosyl-L-homocysteine + H(+). S-adenosyl-L-methionine-dependent methyltransferase that has the ability to methylate both RNAs and proteins. Involved in pre-rRNA processing by catalyzing the site-specific 2'-hydroxyl methylation of ribose moieties in pre-ribosomal RNA. Site specificity is provided by a guide RNA that base pairs with the substrate. Methylation occurs at a characteristic distance from the sequence involved in base pairing with the guide RNA. Probably catalyzes 2'-O-methylation of U6 snRNAs in box C/D RNP complexes. U6 snRNA 2'-O-methylation is required for mRNA splicing fidelity. Also acts as a protein methyltransferase by mediating methylation of 'Gln-105' of histone H2A (H2AQ104me), a modification that impairs binding of the FACT complex and is specifically present at 35S ribosomal DNA locus. Part of the small subunit (SSU) processome, first precursor of the small eukaryotic ribosomal subunit. During the assembly of the SSU processome in the nucleolus, many ribosome biogenesis factors, an RNA chaperone and ribosomal proteins associate with the nascent pre-rRNA and work in concert to generate RNA folding, modifications, rearrangements and cleavage as well as targeted degradation of pre-ribosomal RNA by the RNA exosome. This Mus musculus (Mouse) protein is rRNA 2'-O-methyltransferase fibrillarin.